We begin with the raw amino-acid sequence, 230 residues long: Probable fimbrial chaperone SfmC (230 aa).

The N-terminal stretch at 1 to 23 (MMTKIKLLMLIIFYLIISASAHA) is a signal peptide.

This sequence belongs to the periplasmic pilus chaperone family.

Its subcellular location is the periplasm. In terms of biological role, part of the sfmACDHF fimbrial operon. Could contribute to adhesion to various surfaces in specific environmental niches. Increases adhesion to eukaryotic T24 bladder epithelial cells in the absence of fim genes. This Escherichia coli (strain K12) protein is Probable fimbrial chaperone SfmC (sfmC).